Here is a 236-residue protein sequence, read N- to C-terminus: uncharacterized protein (236 aa).

The first 29 residues, 1–29 (MKGGDKMKKLILLMLLLPISLIGCTDEES), serve as a signal peptide directing secretion.

This is an uncharacterized protein from Archaeoglobus fulgidus (strain ATCC 49558 / DSM 4304 / JCM 9628 / NBRC 100126 / VC-16).